Here is a 432-residue protein sequence, read N- to C-terminus: Ornithine decarboxylase 1A, chloroplastic (432 aa).

Position 95 is an N6-(pyridoxal phosphate)lysine (K95). Pyridoxal 5'-phosphate is bound by residues S227, G265, and 298–301 (EPGR). 341–342 (YD) provides a ligand contact to substrate. Catalysis depends on C377, which acts as the Proton donor; shared with dimeric partner. Position 378 (D378) interacts with substrate. Y406 contributes to the pyridoxal 5'-phosphate binding site.

This sequence belongs to the Orn/Lys/Arg decarboxylase class-II family. Homodimer. Only the dimer is catalytically active, as the active sites are constructed of residues from both monomers. Pyridoxal 5'-phosphate is required as a cofactor.

It is found in the plastid. Its subcellular location is the chloroplast. It carries out the reaction L-ornithine + H(+) = putrescine + CO2. It functions in the pathway alkaloid biosynthesis; nicotine biosynthesis. The protein operates within amine and polyamine biosynthesis; putrescine biosynthesis via L-ornithine pathway; putrescine from L-ornithine: step 1/1. Its function is as follows. Involved in the biosynthesis of pyridine alkaloid natural products, leading mainly to the production of anabasine, anatabine, nicotine and nornicotine, effective deterrents against herbivores with antiparasitic and pesticide properties (neurotoxins); nornicotine serves as the precursor in the synthesis of the carcinogen compound N'-nitrosonornicotine (NNN). Catalyzes the first and rate-limiting step of polyamine biosynthesis that converts ornithine into putrescine, which is the precursor for the polyamines, spermidine and spermine. Polyamines are essential for cell proliferation and are implicated in cellular processes, ranging from DNA replication to apoptosis. In Nicotiana tabacum (Common tobacco), this protein is Ornithine decarboxylase 1A, chloroplastic.